The primary structure comprises 290 residues: MKRIMLFLVTNLAVMLVLGVVLNILFSVLGINKSSISGLLVFCAVFGFGGSFISLLMSKWMAKRSYGVQVIEQPRNETEHWLVSTVARQAREAGIKMPEVGIYDSPEMNAFATGARRDDSLVAVSSGLLYSMSRDEAEAVLAHEVSHVANGDMVTLTLIQGVVNTFVMFFARIVAGVISNFFSSNNDEESSSTGGFAYMITVFVLEMLFGVLASIIVMWFSRQREFRADAGAAKLAGRDKMIAALQRLSRGAEPQLEGSMMAFGINGKRSMSELFMSHPPIEQRIAALRG.

Helical transmembrane passes span 6–26 (LFLVTNLAVMLVLGVVLNILF) and 36–56 (ISGLLVFCAVFGFGGSFISLL). Residue histidine 143 coordinates Zn(2+). Glutamate 144 is an active-site residue. Position 147 (histidine 147) interacts with Zn(2+). Helical transmembrane passes span 158-178 (LIQGVVNTFVMFFARIVAGVI) and 200-220 (ITVFVLEMLFGVLASIIVMWF). Glutamate 225 serves as a coordination point for Zn(2+).

It belongs to the peptidase M48B family. It depends on Zn(2+) as a cofactor.

It is found in the cell inner membrane. This is Protease HtpX from Aeromonas hydrophila subsp. hydrophila (strain ATCC 7966 / DSM 30187 / BCRC 13018 / CCUG 14551 / JCM 1027 / KCTC 2358 / NCIMB 9240 / NCTC 8049).